Here is a 260-residue protein sequence, read N- to C-terminus: Hydroxyacylglutathione hydrolase (260 aa).

7 residues coordinate Zn(2+): H66, H68, D70, H71, H125, D150, and H188.

The protein belongs to the metallo-beta-lactamase superfamily. Glyoxalase II family. In terms of assembly, monomer. It depends on Zn(2+) as a cofactor.

The catalysed reaction is an S-(2-hydroxyacyl)glutathione + H2O = a 2-hydroxy carboxylate + glutathione + H(+). It functions in the pathway secondary metabolite metabolism; methylglyoxal degradation; (R)-lactate from methylglyoxal: step 2/2. Its function is as follows. Thiolesterase that catalyzes the hydrolysis of S-D-lactoyl-glutathione to form glutathione and D-lactic acid. This is Hydroxyacylglutathione hydrolase from Prochlorococcus marinus (strain MIT 9303).